The following is a 227-amino-acid chain: Cytochrome c oxidase subunit 2 (227 aa).

Residues 1 to 14 (MACPVQLGFQDAAS) lie on the Mitochondrial intermembrane side of the membrane. The helical transmembrane segment at 15 to 45 (PIMEELTYFHDHTLMIVFLISSLVLYIISLM) threads the bilayer. At 46–59 (LTTELTHTSTMDAQ) the chain is on the mitochondrial matrix side. Residues 60-87 (EVETVWTILPAVILILIALPSLRILYMM) traverse the membrane as a helical segment. At 88–227 (DEITTPSLTL…HFEEWLLAML (140 aa)) the chain is on the mitochondrial intermembrane side. Residues His-161, Cys-196, Glu-198, Cys-200, His-204, and Met-207 each contribute to the Cu cation site. A Mg(2+)-binding site is contributed by Glu-198.

Belongs to the cytochrome c oxidase subunit 2 family. In terms of assembly, component of the cytochrome c oxidase (complex IV, CIV), a multisubunit enzyme composed of 14 subunits. The complex is composed of a catalytic core of 3 subunits MT-CO1, MT-CO2 and MT-CO3, encoded in the mitochondrial DNA, and 11 supernumerary subunits COX4I, COX5A, COX5B, COX6A, COX6B, COX6C, COX7A, COX7B, COX7C, COX8 and NDUFA4, which are encoded in the nuclear genome. The complex exists as a monomer or a dimer and forms supercomplexes (SCs) in the inner mitochondrial membrane with NADH-ubiquinone oxidoreductase (complex I, CI) and ubiquinol-cytochrome c oxidoreductase (cytochrome b-c1 complex, complex III, CIII), resulting in different assemblies (supercomplex SCI(1)III(2)IV(1) and megacomplex MCI(2)III(2)IV(2)). Found in a complex with TMEM177, COA6, COX18, COX20, SCO1 and SCO2. Interacts with TMEM177 in a COX20-dependent manner. Interacts with COX20. Interacts with COX16. Cu cation serves as cofactor.

It is found in the mitochondrion inner membrane. The catalysed reaction is 4 Fe(II)-[cytochrome c] + O2 + 8 H(+)(in) = 4 Fe(III)-[cytochrome c] + 2 H2O + 4 H(+)(out). Component of the cytochrome c oxidase, the last enzyme in the mitochondrial electron transport chain which drives oxidative phosphorylation. The respiratory chain contains 3 multisubunit complexes succinate dehydrogenase (complex II, CII), ubiquinol-cytochrome c oxidoreductase (cytochrome b-c1 complex, complex III, CIII) and cytochrome c oxidase (complex IV, CIV), that cooperate to transfer electrons derived from NADH and succinate to molecular oxygen, creating an electrochemical gradient over the inner membrane that drives transmembrane transport and the ATP synthase. Cytochrome c oxidase is the component of the respiratory chain that catalyzes the reduction of oxygen to water. Electrons originating from reduced cytochrome c in the intermembrane space (IMS) are transferred via the dinuclear copper A center (CU(A)) of subunit 2 and heme A of subunit 1 to the active site in subunit 1, a binuclear center (BNC) formed by heme A3 and copper B (CU(B)). The BNC reduces molecular oxygen to 2 water molecules using 4 electrons from cytochrome c in the IMS and 4 protons from the mitochondrial matrix. The sequence is that of Cytochrome c oxidase subunit 2 (MT-CO2) from Cheirogaleus medius (Fat-tailed dwarf lemur).